Here is a 142-residue protein sequence, read N- to C-terminus: Baculoviral IAP repeat-containing protein 5 (142 aa).

Residues 18–88 (RVSTFKNWPF…KHSSGCAFLS (71 aa)) form a BIR repeat. Residue S20 is modified to Phosphoserine; by AURKC. Position 23 is an N6-acetyllysine (K23). Residue T34 is modified to Phosphothreonine; by CDK1 and CDK15. Phosphothreonine; by CK2; in vitro is present on T48. Zn(2+)-binding residues include C57, C60, H77, and C84. N6-acetyllysine occurs at positions 90, 110, 112, and 115. Residue T117 is modified to Phosphothreonine; by AURKB.

This sequence belongs to the IAP family. In terms of assembly, monomer or homodimer. Exists as a homodimer in the apo state and as a monomer in the CPC-bound state. The monomer protects cells against apoptosis more efficiently than the dimer. Only the dimeric form is capable of enhancing tubulin stability in cells. When phosphorylated, interacts with LAMTOR5/HBXIP; the resulting complex binds pro-CASP9, as well as active CASP9, but much less efficiently. Component of the chromosomal passenger complex (CPC) composed of at least BIRC5/survivin, CDCA8/borealin, INCENP, AURKB or AURKC; in the complex forms a triple-helix bundle-based subcomplex with INCENP and CDCA8. Interacts with JTB. Interacts (via BIR domain) with histone H3 phosphorylated at 'Thr-3' (H3pT3). Interacts with EVI5. Interacts with GTP-bound RAN in both the S and M phases of the cell cycle. Interacts with USP9X. Interacts with tubulin. Interacts with BIRC2/c-IAP1. The monomeric form interacts with XIAP/BIRC4. Both the dimeric and monomeric form can interact with DIABLO/SMAC. Interacts with BIRC6/bruce. Interacts with FBXL7; this interaction facilitates the polyubiquitination and subsequent proteasomal degradation of BIRC5 by the SCF(FBXL7) E3 ubiquitin-protein ligase complex. In terms of processing, ubiquitinated by the Cul9-RING ubiquitin-protein ligase complex, leading to its degradation. Ubiquitination is required for centrosomal targeting. Deubiquitinated by USP35 or USP38; leading to stabilization. Post-translationally, in vitro phosphorylation at Thr-117 by AURKB prevents interaction with INCENP and localization to mitotic chromosomes. Phosphorylation at Thr-48 by CK2 is critical for its mitotic and anti-apoptotic activities. Phosphorylation at Thr-34 by CDK15 is critical for its anti-apoptotic activity. Phosphorylation at Ser-20 by AURKC is critical for regulation of proper chromosome alignment and segregation, and possibly cytokinesis. Expressed in spleen, lung, brain, heart, kidney and intestine (at protein level). Expressed in cochlea including the organ of Corti, the lateral wall, the interdental cells of the Limbus as well as in cells of the cochlear nerve and the spiral ganglions (at protein level). Also expressed in Schwann cells (at protein level). Not expressed in cells of the inner and outer sulcus or the Reissner's membrane (at protein level).

The protein localises to the cytoplasm. Its subcellular location is the nucleus. The protein resides in the chromosome. It localises to the centromere. It is found in the cytoskeleton. The protein localises to the spindle. Its subcellular location is the kinetochore. The protein resides in the midbody. Multitasking protein that has dual roles in promoting cell proliferation and preventing apoptosis. Component of a chromosome passage protein complex (CPC) which is essential for chromosome alignment and segregation during mitosis and cytokinesis. Acts as an important regulator of the localization of this complex; directs CPC movement to different locations from the inner centromere during prometaphase to midbody during cytokinesis and participates in the organization of the center spindle by associating with polymerized microtubules. Involved in the recruitment of CPC to centromeres during early mitosis via association with histone H3 phosphorylated at 'Thr-3' (H3pT3) during mitosis. The complex with RAN plays a role in mitotic spindle formation by serving as a physical scaffold to help deliver the RAN effector molecule TPX2 to microtubules. May counteract a default induction of apoptosis in G2/M phase. The acetylated form represses STAT3 transactivation of target gene promoters. May play a role in neoplasia. Inhibitor of CASP3 and CASP7. Essential for the maintenance of mitochondrial integrity and function. The protein is Baculoviral IAP repeat-containing protein 5 of Cavia porcellus (Guinea pig).